The primary structure comprises 160 residues: MELPAVNLKVILLVHWLLTTWGCLAFSGSYAWGNFTILALGVWAVAQRDSVDAIGMFLGGLVATIFLDIIYISIFYSSVAVGDTGRFSAGMAIFSLLLKPFSCCLVYHMHRERGGELPLRSDFFGPSQEHSAYQTIDSSDSPADPLASLENKGQAAPRGY.

Residues 1-9 (MELPAVNLK) are Extracellular-facing. The helical transmembrane segment at 10 to 30 (VILLVHWLLTTWGCLAFSGSY) threads the bilayer. At 31–53 (AWGNFTILALGVWAVAQRDSVDA) the chain is on the cytoplasmic side. A helical membrane pass occupies residues 54 to 74 (IGMFLGGLVATIFLDIIYISI). Topologically, residues 75-86 (FYSSVAVGDTGR) are extracellular. A helical transmembrane segment spans residues 87–107 (FSAGMAIFSLLLKPFSCCLVY). Residues 108–160 (HMHRERGGELPLRSDFFGPSQEHSAYQTIDSSDSPADPLASLENKGQAAPRGY) lie on the Cytoplasmic side of the membrane. Residues 110–122 (HRERGGELPLRSD) are interaction with AGTR1. Phosphoserine is present on Ser127. Residues 128–160 (QEHSAYQTIDSSDSPADPLASLENKGQAAPRGY) are disordered. A Phosphothreonine modification is found at Thr135. Residues 137-149 (DSSDSPADPLASL) are compositionally biased toward low complexity. Ser138 is subject to Phosphoserine.

Interacts with RACK1, and with the carboxy-terminal region of AGTR1.

The protein localises to the endoplasmic reticulum membrane. It is found in the golgi apparatus membrane. Its subcellular location is the cytoplasmic vesicle membrane. In terms of biological role, appears to be a negative regulator of type-1 angiotensin II receptor-mediated signaling by regulating receptor internalization as well as mechanism of receptor desensitization such as phosphorylation. May play a role of negative regulator in cardiomyocyte hypertrophy induced by angiotensin II through an inhibition of p38 mitogen-activated protein kinase pathway. Attenuates type-1 angiotensin II receptor growth promoting effect and angiotensin II-induced phosphorylation of protein kinase AKT and of STAT3. The polypeptide is Type-1 angiotensin II receptor-associated protein (Agtrap) (Rattus norvegicus (Rat)).